The sequence spans 470 residues: Cell division protein FtsP (470 aa).

Positions 1–27 form a signal peptide, tat-type signal; the sequence is MSLSRRQFIQASGIALCAGAVPLKASA. In terms of domain architecture, Plastocyanin-like spans 229–287; sequence VRLRLLNASNSRRYQLQMSDGRPLHVISGDQGFLPAPVSVKQLSLAPGERREILVDMSN.

This sequence belongs to the FtsP family. Post-translationally, predicted to be exported by the Tat system. The position of the signal peptide cleavage has not been experimentally proven.

The protein localises to the periplasm. Its function is as follows. Cell division protein that is required for growth during stress conditions. May be involved in protecting or stabilizing the divisomal assembly under conditions of stress. This Shigella dysenteriae serotype 1 (strain Sd197) protein is Cell division protein FtsP.